We begin with the raw amino-acid sequence, 41 residues long: Peptide Hact-SCRiP1 (41 aa).

Intrachain disulfides connect cysteine 5-cysteine 37, cysteine 12-cysteine 31, cysteine 19-cysteine 38, and cysteine 26-cysteine 39.

Expressed in tentacles.

The protein resides in the nematocyst. It localises to the secreted. In terms of biological role, peptide with unknown function. Does not exhibit any effect on human ion channel TRPV1 in a Xenopus laevis oocytes assay. This Heliofungia actiniformis (Mushroom coral) protein is Peptide Hact-SCRiP1.